We begin with the raw amino-acid sequence, 153 residues long: Endoribonuclease YbeY (153 aa).

Residues histidine 114, histidine 118, and histidine 124 each contribute to the Zn(2+) site.

This sequence belongs to the endoribonuclease YbeY family. It depends on Zn(2+) as a cofactor.

Its subcellular location is the cytoplasm. Functionally, single strand-specific metallo-endoribonuclease involved in late-stage 70S ribosome quality control and in maturation of the 3' terminus of the 16S rRNA. The protein is Endoribonuclease YbeY of Shewanella baltica (strain OS223).